The primary structure comprises 371 residues: tRNA-specific 2-thiouridylase MnmA (371 aa).

Residues 22–29 and Met-48 contribute to the ATP site; that span reads GLSGGVDS. An interaction with target base in tRNA region spans residues 108 to 110; it reads NPD. Cys-113 acts as the Nucleophile in catalysis. Cys-113 and Cys-209 are joined by a disulfide. Gly-137 serves as a coordination point for ATP. The tract at residues 159–161 is interaction with tRNA; it reads KDQ. Cys-209 functions as the Cysteine persulfide intermediate in the catalytic mechanism.

The protein belongs to the MnmA/TRMU family.

The protein localises to the cytoplasm. The enzyme catalyses S-sulfanyl-L-cysteinyl-[protein] + uridine(34) in tRNA + AH2 + ATP = 2-thiouridine(34) in tRNA + L-cysteinyl-[protein] + A + AMP + diphosphate + H(+). Its function is as follows. Catalyzes the 2-thiolation of uridine at the wobble position (U34) of tRNA, leading to the formation of s(2)U34. This Coxiella burnetii (strain CbuK_Q154) (Coxiella burnetii (strain Q154)) protein is tRNA-specific 2-thiouridylase MnmA.